The sequence spans 877 residues: G-protein coupled receptor family C group 6 member A (877 aa).

An N-terminal signal peptide occupies residues 1-24 (MAGLDLSLVLMLSVLAGVREVSLT). Residues 25 to 567 (QVNQQGVIAP…EYFEWNSGFA (543 aa)) lie on the Extracellular side of the membrane. N-linked (GlcNAc...) asparagine glycosylation is found at asparagine 53, asparagine 99, asparagine 135, asparagine 263, asparagine 310, asparagine 322, asparagine 338, and asparagine 358. An L-lysine-binding site is contributed by aspartate 388. N-linked (GlcNAc...) asparagine glycosylation is found at asparagine 430, asparagine 475, asparagine 484, asparagine 528, and asparagine 548. The chain crosses the membrane as a helical span at residues 568 to 588 (IALLTLAALGILLLISMSALF). Residues 589–603 (FWQRNSLVVKAAGGP) lie on the Cytoplasmic side of the membrane. The chain crosses the membrane as a helical span at residues 604 to 624 (LCHLILFSLLGSFISVIFFVG). Topologically, residues 625 to 635 (EPSNESCRVRQ) are extracellular. An N-linked (GlcNAc...) asparagine glycan is attached at asparagine 628. The helical transmembrane segment at 636–656 (VIFGLSFTLCVSCILVKSLKI) threads the bilayer. Over 657-676 (LLAFQMNLELKELLRKLYKP) the chain is Cytoplasmic. A helical membrane pass occupies residues 677 to 697 (YVIVCMCMGLQVTICTLWLTL). Topologically, residues 698-720 (HRPFIEKVVQPKSILLECNEGSD) are extracellular. A helical membrane pass occupies residues 721–741 (LMFGLMLGYIVLLALICFTFA). The Cytoplasmic segment spans residues 742–755 (YKGRKLPQKYNEAK). A helical membrane pass occupies residues 756–776 (FITFGMLIYLMAWVIFIPVHV). The Extracellular segment spans residues 777–782 (TTSGKY). The helical transmembrane segment at 783–803 (VPAVEVVVILISNYGILSCHF) threads the bilayer. Topologically, residues 804 to 877 (LPKCYIIIFK…VSVPEIDNVL (74 aa)) are cytoplasmic.

It belongs to the G-protein coupled receptor 3 family. As to quaternary structure, homodimer; disulfide-linked. Expressed in olfactory epithelium. Also expressed in gills, tongue, lips and palatal organ. Not expressed in brain, kidney, liver, muscle, intestine, ovary and skin. In olfactory epithelium, it is widely expressed over the apical and medial portions of the olfactory sensory neurons, regions that contain olfactory neurons. Expressed in external epithelia, which contains taste buds and solitary chemosensory cells. On gill rakers, it is widely expressed in the surface epithelium, but excluded from taste buds.

It is found in the cell membrane. Functionally, olfactory receptor that is activated by amino acids that act as potent odorants in fish. Most highly activated by basic amino acids such as L-lysine and L-arginine. This is G-protein coupled receptor family C group 6 member A (gprc6a) from Carassius auratus (Goldfish).